The chain runs to 404 residues: Glucose-1-phosphate adenylyltransferase (404 aa).

Residues tyrosine 99, glycine 164, 179–180, and serine 197 contribute to the alpha-D-glucose 1-phosphate site; that span reads EK.

This sequence belongs to the bacterial/plant glucose-1-phosphate adenylyltransferase family.

The catalysed reaction is alpha-D-glucose 1-phosphate + ATP + H(+) = ADP-alpha-D-glucose + diphosphate. It participates in capsule biogenesis; capsule polysaccharide biosynthesis. Its pathway is glycan biosynthesis; glycogen biosynthesis. Functionally, involved in the biosynthesis of ADP-glucose, a building block, required in the biosynthesis of maltose-1-phosphate (M1P) and in the elongation reactions to produce linear alpha-1,4-glucans. Catalyzes the reaction between ATP and alpha-D-glucose 1-phosphate (G1P) to produce pyrophosphate and ADP-Glc. The polypeptide is Glucose-1-phosphate adenylyltransferase (Mycobacterium leprae (strain Br4923)).